The primary structure comprises 286 residues: 4-diphosphocytidyl-2-C-methyl-D-erythritol kinase (286 aa).

Residue K12 is part of the active site. 96–106 (PHGAGLGGGSA) is an ATP binding site. D138 is an active-site residue.

The protein belongs to the GHMP kinase family. IspE subfamily.

The enzyme catalyses 4-CDP-2-C-methyl-D-erythritol + ATP = 4-CDP-2-C-methyl-D-erythritol 2-phosphate + ADP + H(+). The protein operates within isoprenoid biosynthesis; isopentenyl diphosphate biosynthesis via DXP pathway; isopentenyl diphosphate from 1-deoxy-D-xylulose 5-phosphate: step 3/6. Its function is as follows. Catalyzes the phosphorylation of the position 2 hydroxy group of 4-diphosphocytidyl-2C-methyl-D-erythritol. This is 4-diphosphocytidyl-2-C-methyl-D-erythritol kinase from Nitratidesulfovibrio vulgaris (strain ATCC 29579 / DSM 644 / CCUG 34227 / NCIMB 8303 / VKM B-1760 / Hildenborough) (Desulfovibrio vulgaris).